Consider the following 125-residue polypeptide: Large ribosomal subunit protein bL12 (125 aa).

The protein belongs to the bacterial ribosomal protein bL12 family. In terms of assembly, homodimer. Part of the ribosomal stalk of the 50S ribosomal subunit. Forms a multimeric L10(L12)X complex, where L10 forms an elongated spine to which 2 to 4 L12 dimers bind in a sequential fashion. Binds GTP-bound translation factors.

Its function is as follows. Forms part of the ribosomal stalk which helps the ribosome interact with GTP-bound translation factors. Is thus essential for accurate translation. This Hyphomonas neptunium (strain ATCC 15444) protein is Large ribosomal subunit protein bL12.